Consider the following 300-residue polypeptide: GTPase Era (300 aa).

The Era-type G domain maps to 6–173 (KSGFVAIVGR…MDVLVEQMPE (168 aa)). Positions 14-21 (GRPNVGKS) are G1. 14 to 21 (GRPNVGKS) is a GTP binding site. A G2 region spans residues 40–44 (QTTRN). A G3 region spans residues 61–64 (DTPG). GTP contacts are provided by residues 61 to 65 (DTPGI) and 123 to 126 (NKID). The G4 stretch occupies residues 123–126 (NKID). Residues 152-154 (ISA) form a G5 region. Residues 204 to 281 (TRDEIPHSVA…YLELWVKVQK (78 aa)) enclose the KH type-2 domain.

Belongs to the TRAFAC class TrmE-Era-EngA-EngB-Septin-like GTPase superfamily. Era GTPase family. Monomer.

Its subcellular location is the cytoplasm. It is found in the cell membrane. Functionally, an essential GTPase that binds both GDP and GTP, with rapid nucleotide exchange. Plays a role in 16S rRNA processing and 30S ribosomal subunit biogenesis and possibly also in cell cycle regulation and energy metabolism. In Enterococcus faecalis (strain ATCC 700802 / V583), this protein is GTPase Era.